Reading from the N-terminus, the 485-residue chain is GTPase Obg (485 aa).

In terms of domain architecture, Obg spans M1–L159. Residues A160–F332 enclose the OBG-type G domain. GTP contacts are provided by residues G166 to S173, F191 to V195, D213 to G216, N284 to D287, and S313 to A315. Mg(2+) contacts are provided by S173 and T193. 4 stretches are compositionally biased toward low complexity: residues A367–K385, R394–K428, R437–K446, and R455–R474. Residues A367–S485 are disordered.

This sequence belongs to the TRAFAC class OBG-HflX-like GTPase superfamily. OBG GTPase family. Monomer. Mg(2+) serves as cofactor.

It is found in the cytoplasm. Functionally, an essential GTPase which binds GTP, GDP and possibly (p)ppGpp with moderate affinity, with high nucleotide exchange rates and a fairly low GTP hydrolysis rate. Plays a role in control of the cell cycle, stress response, ribosome biogenesis and in those bacteria that undergo differentiation, in morphogenesis control. The sequence is that of GTPase Obg from Myxococcus xanthus (strain DK1622).